A 100-amino-acid chain; its full sequence is MKLTPREKDKLLIFTAALLAERRRARGLKLNYPETVAFITAALMEAARDGRTVAEVMHYGTTLLTRDDVMEGVPEMIPDIQVEATFPDGTKLVTVHHPIP.

The protein belongs to the urease gamma subunit family. Heterotrimer of UreA (gamma), UreB (beta) and UreC (alpha) subunits. Three heterotrimers associate to form the active enzyme.

Its subcellular location is the cytoplasm. The catalysed reaction is urea + 2 H2O + H(+) = hydrogencarbonate + 2 NH4(+). The protein operates within nitrogen metabolism; urea degradation; CO(2) and NH(3) from urea (urease route): step 1/1. This chain is Urease subunit gamma, found in Burkholderia mallei (strain NCTC 10247).